The primary structure comprises 157 residues: XylDLEGF operon transcriptional activator 2 (157 aa).

The HTH araC/xylS-type domain occupies 39–140 (ERVVQFIEEN…GELPSDTLSL (102 aa)). 2 consecutive DNA-binding regions (H-T-H motif) follow at residues 56-77 (EQLA…EKHT) and 107-130 (ITEV…RSTF).

It is found in the cytoplasm. In terms of biological role, regulatory protein of the TOL plasmid xyl operons. XylS activates the xylXYZLTEGFJQKIH operon required for the degradation of toluene, m-xylene and p-xylene. In Pseudomonas putida (Arthrobacter siderocapsulatus), this protein is XylDLEGF operon transcriptional activator 2 (xylS2).